We begin with the raw amino-acid sequence, 201 residues long: uncharacterized protein (201 aa).

This is an uncharacterized protein from Cestrum yellow leaf curling virus (CmYLCV).